The chain runs to 511 residues: D-alanine--D-alanyl carrier protein ligase (511 aa).

152–153 (TS) provides a ligand contact to ATP. Asp199 is a binding site for D-alanine. 294–299 (NAYGPT) lines the ATP pocket. D-alanine is bound at residue Val303. ATP contacts are provided by residues Asp385, 397–400 (YGGR), and Lys499. D-alanine is bound at residue Lys499.

It belongs to the ATP-dependent AMP-binding enzyme family. DltA subfamily.

It is found in the cytoplasm. It carries out the reaction holo-[D-alanyl-carrier protein] + D-alanine + ATP = D-alanyl-[D-alanyl-carrier protein] + AMP + diphosphate. It participates in cell wall biogenesis; lipoteichoic acid biosynthesis. In terms of biological role, catalyzes the first step in the D-alanylation of lipoteichoic acid (LTA), the activation of D-alanine and its transfer onto the D-alanyl carrier protein (Dcp) DltC. In an ATP-dependent two-step reaction, forms a high energy D-alanyl-AMP intermediate, followed by transfer of the D-alanyl residue as a thiol ester to the phosphopantheinyl prosthetic group of the Dcp. D-alanylation of LTA plays an important role in modulating the properties of the cell wall in Gram-positive bacteria, influencing the net charge of the cell wall. The polypeptide is D-alanine--D-alanyl carrier protein ligase (Streptococcus agalactiae serotype V (strain ATCC BAA-611 / 2603 V/R)).